Consider the following 308-residue polypeptide: Putative hydrolase MT0526 (308 aa).

Residues 1 to 48 are disordered; it reads MMVSSHLGSPDQAGHVDLASPADPPPPDASASHSPVDMPAPVAAAGSD. Catalysis depends on D62, which acts as the Nucleophile. Residues D62, D64, and D237 each contribute to the Mg(2+) site. Residue D64 is the Proton donor of the active site.

It belongs to the HAD-like hydrolase superfamily. SerB family. Mg(2+) is required as a cofactor.

The polypeptide is Putative hydrolase MT0526 (Mycobacterium tuberculosis (strain CDC 1551 / Oshkosh)).